The primary structure comprises 407 residues: Phosphoglycerate kinase (407 aa).

Substrate is bound by residues 27–29 (DLN), Arg-43, 66–69 (HLGR), Arg-125, and Arg-165. Residues Lys-215, Gly-303, Glu-334, and 363–366 (GGDS) contribute to the ATP site.

The protein belongs to the phosphoglycerate kinase family. As to quaternary structure, monomer.

Its subcellular location is the cytoplasm. The enzyme catalyses (2R)-3-phosphoglycerate + ATP = (2R)-3-phospho-glyceroyl phosphate + ADP. Its pathway is carbohydrate degradation; glycolysis; pyruvate from D-glyceraldehyde 3-phosphate: step 2/5. The protein is Phosphoglycerate kinase of Mycobacterium sp. (strain JLS).